A 193-amino-acid polypeptide reads, in one-letter code: Peptidyl-tRNA hydrolase (193 aa).

A tRNA-binding site is contributed by Tyr16. His21 serves as the catalytic Proton acceptor. Positions 67, 69, and 115 each coordinate tRNA.

This sequence belongs to the PTH family. As to quaternary structure, monomer.

Its subcellular location is the cytoplasm. The catalysed reaction is an N-acyl-L-alpha-aminoacyl-tRNA + H2O = an N-acyl-L-amino acid + a tRNA + H(+). Hydrolyzes ribosome-free peptidyl-tRNAs (with 1 or more amino acids incorporated), which drop off the ribosome during protein synthesis, or as a result of ribosome stalling. Functionally, catalyzes the release of premature peptidyl moieties from peptidyl-tRNA molecules trapped in stalled 50S ribosomal subunits, and thus maintains levels of free tRNAs and 50S ribosomes. This chain is Peptidyl-tRNA hydrolase, found in Baumannia cicadellinicola subsp. Homalodisca coagulata.